A 109-amino-acid polypeptide reads, in one-letter code: Nucleoid-associated protein SO_2014 (109 aa).

It belongs to the YbaB/EbfC family. Homodimer.

It localises to the cytoplasm. It is found in the nucleoid. Functionally, binds to DNA and alters its conformation. May be involved in regulation of gene expression, nucleoid organization and DNA protection. This Shewanella oneidensis (strain ATCC 700550 / JCM 31522 / CIP 106686 / LMG 19005 / NCIMB 14063 / MR-1) protein is Nucleoid-associated protein SO_2014.